The chain runs to 312 residues: Cytochrome c biogenesis protein CcsA (312 aa).

The next 8 helical transmembrane spans lie at 9 to 29 (ILTH…LITF), 44 to 64 (GIIV…ISSG), 71 to 91 (LYES…IPYF), 111 to 131 (GFAT…VPAL), 143 to 163 (MILG…LLVI), 216 to 236 (VISL…VWAN), 251 to 271 (WAFI…NINL), and 277 to 297 (AIIA…VNLL).

The protein belongs to the CcmF/CycK/Ccl1/NrfE/CcsA family. As to quaternary structure, may interact with Ccs1.

The protein localises to the plastid. It localises to the chloroplast thylakoid membrane. In terms of biological role, required during biogenesis of c-type cytochromes (cytochrome c6 and cytochrome f) at the step of heme attachment. This chain is Cytochrome c biogenesis protein CcsA, found in Atropa belladonna (Belladonna).